Reading from the N-terminus, the 101-residue chain is MSDQEAKPSTEDLGDKKEGEYIKLKVIGQDSSEIHFKVKMTTHLKKLKESYCQRQGVPMNSLRFLFEGQRIADNHTPKELGMEEEDVIEVYHEQTGGHSTV.

Residue Ser-2 is modified to N-acetylserine. Position 2 is a phosphoserine (Ser-2). A Glycyl lysine isopeptide (Lys-Gly) (interchain with G-Cter in SUMO1); alternate cross-link involves residue Lys-7. A Glycyl lysine isopeptide (Lys-Gly) (interchain with G-Cter in SUMO2); alternate cross-link involves residue Lys-7. Ser-9 is modified (phosphoserine). Glycyl lysine isopeptide (Lys-Gly) (interchain with G-Cter in SUMO2) cross-links involve residues Lys-16, Lys-17, and Lys-23. The Ubiquitin-like domain maps to 20 to 97; it reads EYIKLKVIGQ…IEVYHEQTGG (78 aa). Lys-25 participates in a covalent cross-link: Glycyl lysine isopeptide (Lys-Gly) (interchain with G-Cter in SUMO1). At Ser-32 the chain carries Phosphoserine. Residues Lys-37, Lys-39, Lys-45, and Lys-46 each participate in a glycyl lysine isopeptide (Lys-Gly) (interchain with G-Cter in SUMO2) cross-link. Gly-97 is covalently cross-linked (Glycyl lysine isopeptide (Gly-Lys) (interchain with K-? in acceptor proteins)). The propeptide occupies 98–101; it reads HSTV.

It belongs to the ubiquitin family. SUMO subfamily. Covalently attached to KCNB1; UBE2I increases cross-linking with KCNB1 and PIAS1 decreases cross-links with KCNB1. Interacts with SAE2, RANBP2, PIAS1 and PIAS2. Interacts with PRKN. Covalently attached to a number of proteins such as IKFZ1, PML, RANGAP1, HIPK2, SP100, p53, p73-alpha, MDM2, JUN, DNMT3B and TDG. Also interacts with HIF1A, HIPK2, HIPK3, CHD3, EXOSC9, RAD51 and RAD52. Interacts with USP25 (via ts SIM domain); the interaction weakly sumoylates USP25. Interacts with SIMC1, CASP8AP2, RNF111 and SOBP (via SIM domains). Interacts with BHLHE40/DEC1. Interacts with RWDD3. Interacts with UBE2I/UBC9 and this interaction is enhanced in the presence of RWDD3. Interacts with MTA1. Interacts with SENP2. Interacts with HINT1. Cleavage of precursor form by SENP1, SENP2 is necessary for function. Post-translationally, polymeric SUMO1 chains undergo polyubiquitination by RNF4.

It localises to the nucleus membrane. Its subcellular location is the nucleus speckle. The protein localises to the cytoplasm. The protein resides in the nucleus. It is found in the PML body. It localises to the cell membrane. Functionally, ubiquitin-like protein that can be covalently attached to proteins as a monomer or a lysine-linked polymer. Covalent attachment via an isopeptide bond to its substrates requires prior activation by the E1 complex SAE1-SAE2 and linkage to the E2 enzyme UBE2I, and can be promoted by E3 ligases such as PIAS1-4, RANBP2 or CBX4. This post-translational modification on lysine residues of proteins plays a crucial role in a number of cellular processes such as nuclear transport, DNA replication and repair, mitosis and signal transduction. Involved for instance in targeting RANGAP1 to the nuclear pore complex protein RANBP2. Covalently attached to the voltage-gated potassium channel KCNB1; this modulates the gating characteristics of KCNB1. Polymeric SUMO1 chains are also susceptible to polyubiquitination which functions as a signal for proteasomal degradation of modified proteins. May also regulate a network of genes involved in palate development. Covalently attached to ZFHX3. This Cervus nippon (Sika deer) protein is Small ubiquitin-related modifier 1 (SUMO1).